Here is a 100-residue protein sequence, read N- to C-terminus: Small ribosomal subunit protein uS14c (100 aa).

The protein belongs to the universal ribosomal protein uS14 family. Part of the 30S ribosomal subunit.

It localises to the plastid. The protein localises to the chloroplast. Functionally, binds 16S rRNA, required for the assembly of 30S particles. The protein is Small ribosomal subunit protein uS14c of Draba nemorosa (Woodland whitlowgrass).